The following is a 321-amino-acid chain: Lipoyl synthase (321 aa).

[4Fe-4S] cluster is bound by residues C68, C73, C79, C94, C98, C101, and S308. One can recognise a Radical SAM core domain in the interval 80 to 297 (FNHGTATFMI…KVLADELGFT (218 aa)).

The protein belongs to the radical SAM superfamily. Lipoyl synthase family. It depends on [4Fe-4S] cluster as a cofactor.

It is found in the cytoplasm. It catalyses the reaction [[Fe-S] cluster scaffold protein carrying a second [4Fe-4S](2+) cluster] + N(6)-octanoyl-L-lysyl-[protein] + 2 oxidized [2Fe-2S]-[ferredoxin] + 2 S-adenosyl-L-methionine + 4 H(+) = [[Fe-S] cluster scaffold protein] + N(6)-[(R)-dihydrolipoyl]-L-lysyl-[protein] + 4 Fe(3+) + 2 hydrogen sulfide + 2 5'-deoxyadenosine + 2 L-methionine + 2 reduced [2Fe-2S]-[ferredoxin]. It participates in protein modification; protein lipoylation via endogenous pathway; protein N(6)-(lipoyl)lysine from octanoyl-[acyl-carrier-protein]: step 2/2. Its function is as follows. Catalyzes the radical-mediated insertion of two sulfur atoms into the C-6 and C-8 positions of the octanoyl moiety bound to the lipoyl domains of lipoate-dependent enzymes, thereby converting the octanoylated domains into lipoylated derivatives. In Shewanella sp. (strain MR-7), this protein is Lipoyl synthase.